Reading from the N-terminus, the 571-residue chain is UvrABC system protein C (571 aa).

The region spanning 15–93 (TSPGVYLWKD…VDRFNPEFNI (79 aa)) is the GIY-YIG domain. Residues 184–219 (NNYLNELTNKMHTAANNMQFELALFLRDGLTYLKKL) form the UVR domain.

The protein belongs to the UvrC family. As to quaternary structure, interacts with UvrB in an incision complex.

The protein localises to the cytoplasm. The UvrABC repair system catalyzes the recognition and processing of DNA lesions. UvrC both incises the 5' and 3' sides of the lesion. The N-terminal half is responsible for the 3' incision and the C-terminal half is responsible for the 5' incision. In Mycoplasmopsis agalactiae (strain NCTC 10123 / CIP 59.7 / PG2) (Mycoplasma agalactiae), this protein is UvrABC system protein C.